The chain runs to 282 residues: Pantothenate synthetase (282 aa).

ATP is bound at residue 26–33; it reads MGNLHEGH. Catalysis depends on His33, which acts as the Proton donor. Residue Gln57 coordinates (R)-pantoate. Gln57 lines the beta-alanine pocket. 148–151 is an ATP binding site; the sequence is GKKD. Residue Gln154 coordinates (R)-pantoate. 185-188 serves as a coordination point for ATP; it reads LSSR.

It belongs to the pantothenate synthetase family. Homodimer.

It localises to the cytoplasm. It catalyses the reaction (R)-pantoate + beta-alanine + ATP = (R)-pantothenate + AMP + diphosphate + H(+). The protein operates within cofactor biosynthesis; (R)-pantothenate biosynthesis; (R)-pantothenate from (R)-pantoate and beta-alanine: step 1/1. Functionally, catalyzes the condensation of pantoate with beta-alanine in an ATP-dependent reaction via a pantoyl-adenylate intermediate. This chain is Pantothenate synthetase, found in Paracidovorax citrulli (strain AAC00-1) (Acidovorax citrulli).